The sequence spans 353 residues: Cellulose-complementing protein (353 aa).

Disordered regions lie at residues 1-21 (MSASGSDEVAGGGQAGSPQDF), 75-94 (PQIAVAPPPPPVVPDPPAIV), and 117-337 (AVPA…SPRP). Over residues 80-91 (APPPPPVVPDPP) the composition is skewed to pro residues. 2 stretches are compositionally biased toward low complexity: residues 117 to 132 (AVPAEPPVQEAPVQAA) and 142 to 164 (IAEQAPPAAPDPASVPYANVAAA). Residues 165 to 175 (PVPPDPAPVTP) are compositionally biased toward pro residues. Composition is skewed to polar residues over residues 196-226 (QVRTVQEGATPSRVPSRSMNAFPRTSASSIS) and 278-304 (STRSVRSNVSRMTSMTKTDTNSSQASR).

This chain is Cellulose-complementing protein (ccpAX), found in Komagataeibacter xylinus (Gluconacetobacter xylinus).